Consider the following 501-residue polypeptide: Acyl-CoA-binding domain-containing protein 5A (501 aa).

Positions 9–98 (YEQRFNAAVK…LKLILESMPV (90 aa)) constitute an ACB domain. An acyl-CoA contacts are provided by residues 20–29 (IQNLPPNGSF), 40–44 (YSYYK), Lys66, and Tyr85. A disordered region spans residues 173 to 405 (IDLEDREDDD…GERWGADGPM (233 aa)). The segment covering 176-195 (EDREDDDDEDEEGERDEVEE) has biased composition (acidic residues). Positions 219–235 (SNGSISQHKGLSNGTHG) are enriched in polar residues. 3 stretches are compositionally biased toward basic and acidic residues: residues 236–254 (SKSD…HMNH), 266–283 (NSEK…HVAS), and 328–366 (RSQD…KRSD). A compositionally biased stretch (low complexity) spans 376–389 (SRSPASGSGSAGPQ). Positions 406–437 (TENLNEQIICALARLQDDMQSVLQRLHTLEAL) form a coiled coil. A helical transmembrane segment spans residues 465–485 (WWPFDVSLGTVAFAVVWPFVV).

This sequence belongs to the ATG37 family.

Its subcellular location is the membrane. In terms of biological role, acyl-CoA binding protein which acts as the peroxisome receptor for pexophagy but is dispensable for aggrephagy and nonselective autophagy. Binds medium- and long-chain acyl-CoA esters. This is Acyl-CoA-binding domain-containing protein 5A (acbd5a) from Danio rerio (Zebrafish).